The chain runs to 57 residues: Large ribosomal subunit protein uL30 (57 aa).

The protein belongs to the universal ribosomal protein uL30 family. Part of the 50S ribosomal subunit.

In Acholeplasma laidlawii (strain PG-8A), this protein is Large ribosomal subunit protein uL30.